We begin with the raw amino-acid sequence, 425 residues long: Kynurenine/alpha-aminoadipate aminotransferase, mitochondrial (425 aa).

Residues 1 to 29 (MNYARFITATSAARKPSTIRVMTEILSKA) constitute a mitochondrion transit peptide. Residue R20 coordinates substrate. K69 bears the N6-acetyllysine mark. Positions 74 and 142 each coordinate substrate. The segment at 178–208 (WKPEDSKNPKKNSPKFLYTVPNGNNPSGNSL) is disordered. K179 is modified (N6-acetyllysine). A compositionally biased stretch (polar residues) spans 198-208 (PNGNNPSGNSL). Residue N202 coordinates substrate. K263 carries the N6-(pyridoxal phosphate)lysine; alternate modification. Residues K263 and K339 each carry the N6-acetyllysine; alternate modification. N6-succinyllysine; alternate occurs at positions 263 and 339. A substrate-binding site is contributed by R399. K422 is modified (N6-acetyllysine).

This sequence belongs to the class-I pyridoxal-phosphate-dependent aminotransferase family. As to quaternary structure, homodimer. Pyridoxal 5'-phosphate is required as a cofactor.

The protein resides in the mitochondrion. It catalyses the reaction L-kynurenine + 2-oxoglutarate = kynurenate + L-glutamate + H2O. The catalysed reaction is L-2-aminoadipate + 2-oxoglutarate = 2-oxoadipate + L-glutamate. The enzyme catalyses glycine + 2-oxoglutarate = glyoxylate + L-glutamate. It carries out the reaction L-kynurenine + glyoxylate = kynurenate + glycine + H2O. It catalyses the reaction 3-hydroxy-L-kynurenine + glyoxylate = xanthurenate + glycine + H2O. The catalysed reaction is 2-oxohexanoate + L-kynurenine = L-2-aminohexanoate + kynurenate + H2O. The enzyme catalyses 3-phenylpyruvate + L-kynurenine = kynurenate + L-phenylalanine + H2O. It carries out the reaction 4-methylsulfanyl-2-oxobutanoate + L-kynurenine = kynurenate + L-methionine + H2O. It catalyses the reaction 2-oxo-3-sulfanylpropanoate + L-kynurenine = kynurenate + L-cysteine + H2O. The catalysed reaction is indole-3-pyruvate + L-kynurenine = kynurenate + L-tryptophan + H2O. The enzyme catalyses 2-oxopentanoate + L-kynurenine = L-2-aminopentanoate + kynurenate + H2O. It carries out the reaction 4-methyl-2-oxopentanoate + L-kynurenine = kynurenate + L-leucine + H2O. It catalyses the reaction glyoxylate + L-methionine = 4-methylsulfanyl-2-oxobutanoate + glycine. The catalysed reaction is L-2-aminoadipate + glyoxylate = 2-oxoadipate + glycine. The enzyme catalyses L-tyrosine + glyoxylate = 3-(4-hydroxyphenyl)pyruvate + glycine. It carries out the reaction glyoxylate + L-phenylalanine = 3-phenylpyruvate + glycine. It catalyses the reaction L-tryptophan + glyoxylate = indole-3-pyruvate + glycine. The catalysed reaction is L-leucine + glyoxylate = 4-methyl-2-oxopentanoate + glycine. The enzyme catalyses 2-oxobutanoate + L-kynurenine = (2S)-2-aminobutanoate + kynurenate + H2O. It carries out the reaction 2-oxoadipate + L-kynurenine = L-2-aminoadipate + kynurenate + H2O. The protein operates within amino-acid degradation; L-lysine degradation via saccharopine pathway; glutaryl-CoA from L-lysine: step 4/6. In terms of biological role, transaminase with broad substrate specificity. Has transaminase activity towards aminoadipate, kynurenine, methionine and glutamate. Shows activity also towards tryptophan, aspartate and hydroxykynurenine. Accepts a variety of oxo-acids as amino-group acceptors, with a preference for 2-oxoglutarate, 2-oxocaproic acid, phenylpyruvate and alpha-oxo-gamma-methiol butyric acid. Can also use glyoxylate as amino-group acceptor (in vitro). This Bos taurus (Bovine) protein is Kynurenine/alpha-aminoadipate aminotransferase, mitochondrial.